Here is a 751-residue protein sequence, read N- to C-terminus: Lysine decarboxylase LdcA (751 aa).

Belongs to the Orn/Lys/Arg decarboxylase class-I family. As to quaternary structure, homodecamer.

The catalysed reaction is L-lysine + H(+) = cadaverine + CO2. Its function is as follows. Plays an essential role in lysine utilization by acting as a lysine decarboxylase. The chain is Lysine decarboxylase LdcA from Pseudomonas aeruginosa (strain ATCC 15692 / DSM 22644 / CIP 104116 / JCM 14847 / LMG 12228 / 1C / PRS 101 / PAO1).